The chain runs to 173 residues: Mesencephalic astrocyte-derived neurotrophic factor homolog (173 aa).

An N-terminal signal peptide occupies residues 1-22; that stretch reads MKTWHMVVVIGFLATLAQTSLA. 4 disulfides stabilise this stretch: cysteine 28/cysteine 114, cysteine 31/cysteine 103, cysteine 61/cysteine 72, and cysteine 148/cysteine 151.

Belongs to the ARMET family.

The protein resides in the secreted. Required during the maturation of the embryonic nervous system for maintenance of neuronal and cuticular connectivity. Essential for maintenance of dopaminergic neurons and dopamine levels. This Drosophila simulans (Fruit fly) protein is Mesencephalic astrocyte-derived neurotrophic factor homolog.